Reading from the N-terminus, the 328-residue chain is GTPase Obg (328 aa).

Positions 1-159 (MNFIDEVKIY…MWVQLSLKLL (159 aa)) constitute an Obg domain. The 168-residue stretch at 160–327 (SDVGLVGLPN…IIKLALQTIK (168 aa)) folds into the OBG-type G domain. GTP is bound by residues 166–173 (GLPNAGKS), 191–195 (FTTLV), 212–215 (DIPG), 279–282 (NKID), and 308–310 (STY). Mg(2+)-binding residues include serine 173 and threonine 193.

The protein belongs to the TRAFAC class OBG-HflX-like GTPase superfamily. OBG GTPase family. In terms of assembly, monomer. It depends on Mg(2+) as a cofactor.

The protein resides in the cytoplasm. In terms of biological role, an essential GTPase which binds GTP, GDP and possibly (p)ppGpp with moderate affinity, with high nucleotide exchange rates and a fairly low GTP hydrolysis rate. Plays a role in control of the cell cycle, stress response, ribosome biogenesis and in those bacteria that undergo differentiation, in morphogenesis control. In Rickettsia bellii (strain RML369-C), this protein is GTPase Obg.